We begin with the raw amino-acid sequence, 287 residues long: GTPase Era (287 aa).

The Era-type G domain occupies 11–174 (RSGFVAVIGR…RSYLASSLPE (164 aa)). Residues 19-26 (GRTNVGKS) and 66-70 (DTPGI) each bind GTP. Positions 205-273 (LRDELPQALA…PLTLRVKVQR (69 aa)) constitute a KH type-2 domain.

The protein belongs to the TRAFAC class TrmE-Era-EngA-EngB-Septin-like GTPase superfamily. Era GTPase family. Monomer.

It localises to the cytoplasm. Its subcellular location is the cell membrane. Functionally, an essential GTPase that binds both GDP and GTP, with rapid nucleotide exchange. Plays a role in 16S rRNA processing and 30S ribosomal subunit biogenesis and possibly also in cell cycle regulation and energy metabolism. The polypeptide is GTPase Era (Acidimicrobium ferrooxidans (strain DSM 10331 / JCM 15462 / NBRC 103882 / ICP)).